The following is a 259-amino-acid chain: Peroxiredoxin-4 (259 aa).

A Thioredoxin domain is found at 66 to 224 (IRIRKPAPAF…AIRTLKALKF (159 aa)). Residue Cys111 is the Cysteine sulfenic acid (-SOH) intermediate of the active site.

This sequence belongs to the peroxiredoxin family. AhpC/Prx1 subfamily. As to quaternary structure, homodimer; disulfide-linked, upon oxidation. 5 homodimers assemble to form a ring-like decamer.

The protein resides in the cytoplasm. It localises to the endoplasmic reticulum. It carries out the reaction a hydroperoxide + [thioredoxin]-dithiol = an alcohol + [thioredoxin]-disulfide + H2O. Functionally, thiol-specific peroxidase that catalyzes the reduction of hydrogen peroxide and organic hydroperoxides to water and alcohols, respectively. Plays a role in cell protection against oxidative stress by detoxifying peroxides and as sensor of hydrogen peroxide-mediated signaling events. Regulates the activation of NF-kappa-B in the cytosol by a modulation of I-kappa-B-alpha phosphorylation. The chain is Peroxiredoxin-4 (prdx4) from Dictyostelium discoideum (Social amoeba).